The primary structure comprises 305 residues: Tyrosine recombinase XerC (305 aa).

In terms of domain architecture, Core-binding (CB) spans 4 to 95 (TQIQELIIKW…AIKNFYKFLE (92 aa)). A Tyr recombinase domain is found at 116 to 298 (LLPKALSEEE…SIKHLETAYV (183 aa)). Active-site residues include arginine 159, lysine 182, histidine 250, arginine 253, and histidine 276. The active-site O-(3'-phospho-DNA)-tyrosine intermediate is the tyrosine 285.

The protein belongs to the 'phage' integrase family. XerC subfamily. As to quaternary structure, forms a cyclic heterotetrameric complex composed of two molecules of XerC and two molecules of XerD.

It localises to the cytoplasm. Its function is as follows. Site-specific tyrosine recombinase, which acts by catalyzing the cutting and rejoining of the recombining DNA molecules. The XerC-XerD complex is essential to convert dimers of the bacterial chromosome into monomers to permit their segregation at cell division. It also contributes to the segregational stability of plasmids. This chain is Tyrosine recombinase XerC, found in Rickettsia bellii (strain OSU 85-389).